A 436-amino-acid chain; its full sequence is T-box transcription factor TBX6 (436 aa).

A DNA-binding region (T-box) is located at residues 100-273 (LWKEFSAVGT…ANPFAKGFRE (174 aa)). Basic and acidic residues predominate over residues 274 to 284 (NGRNCKRERDA). Disordered stretches follow at residues 274–344 (NGRN…CGGP) and 360–383 (PSHL…APYS). Low complexity predominate over residues 332–344 (EAASASAPPCGGP).

It is found in the nucleus. In terms of biological role, T-box transcription factor that plays an essential role in the determination of the fate of axial stem cells: neural vs mesodermal. Acts in part by down-regulating, a specific enhancer (N1) of SOX2, to inhibit neural development. Seems to play also an essential role in left/right axis determination and acts through effects on Notch signaling around the node as well as through an effect on the morphology and motility of the nodal cilia. The polypeptide is T-box transcription factor TBX6 (Tbx6) (Mus musculus (Mouse)).